We begin with the raw amino-acid sequence, 859 residues long: LQGLPGKDGETGAAGPLDPGPVGERGEQGAPGPSGFQGLPGPPGPPGESGKPGDQGVPGEAGAPGLVGPRGERGFPGERGSPGAQGLQGPRGLPGTPGTDGPKGATGPAGPNGAQGPPGLQGMPGERGAAGIAGPKGDRGDVGEKGPEGAPGKDGARGLTGPIGPPGPAGPNGEKGESGPPGPSGAAGARGAPGERGEPGAPGPAGFAGPPGADGQPGAKGEQGEPGQKGDAGAPGPQGPSGAPGPQGPTGVTGPKGARGAQGPPGATGFPGAAGRVGPPGPNGNPGPPGPPGSAGKDGPKGVRGDAGPPGRAGDPGLQGPAGPPGEKGEPGEDGPAGPDGPPGPQGLAGQRGIVGLPGQRGERGFPGLPGPSGEPGKQGAPGSAGDRGPPGPVGPPGLTGPAGEPGREGNPGADGPPGRDGAAGVKGDRGETGPVGAPGAPGAPGAPGPVGPTGKQGDRGETGAQGPMGPSGPAGARGMPGPQGPRGDKGETGEAGERGLKGHRGFTGLQGLPGPPGPSGDQGAAGPAGPSGPRGPPGPVGPSGKDGSNGMPGPIGPPGPRGRSGEPGPAGPPGNPGPPGPPGPPGTGIDMSAFAGLGQTEKGPDPIRYMRADEAAGGLRQHDVEVDATLKSLNNQIESIRSPEGSKKNPARTCRDIKLCHPEWKSGDYWIDPNQGCTLDAIKVFCNMETGETCVYPTPSSIPRKNWWTSKTKDKKHVWFAETINGGFHFSYGDENLSPNTASIQMTFLRLLSTEGSQNVTYHCKNSIAYMDEETGNLKKAILIQGSNDVEIRAEGNSRFTYSVLEDGCTKHTGKWGKTVIEYRSQKTSRLPIVDIAPMDIGGADQEFGVDIGPVCFL.

Residues 1 to 607 (LQGLPGKDGE…LGQTEKGPDP (607 aa)) form a disordered region. 4-hydroxyproline occurs at positions 31 and 40. 3-hydroxyproline is present on Pro42. A 4-hydroxyproline mark is found at Pro43 and Pro46. Positions 78-121 (ERGSPGAQGLQGPRGLPGTPGTDGPKGATGPAGPNGAQGPPGLQ) are enriched in low complexity. The segment covering 136-147 (KGDRGDVGEKGP) has biased composition (basic and acidic residues). Composition is skewed to low complexity over residues 204–220 (PAGFAGPPGADGQPGAK) and 249–277 (PTGVTGPKGARGAQGPPGATGFPGAAGRV). At Pro279 the chain carries 3-hydroxyproline. A compositionally biased stretch (pro residues) spans 279–292 (PPGPNGNPGPPGPP). 3 positions are modified to 4-hydroxyproline: Pro280, Pro286, and Pro292. Positions 306 to 321 (DAGPPGRAGDPGLQGP) are enriched in low complexity. Positions 487-501 (RGDKGETGEAGERGL) are enriched in basic and acidic residues. The interval 491–586 (GETGEAGERG…PGPPGPPGPP (96 aa)) is triple-helical region. Pro516 bears the 3-hydroxyproline mark. A compositionally biased stretch (low complexity) spans 520–529 (SGDQGAAGPA). Pro553 carries the post-translational modification 4-hydroxyproline. At Pro558 the chain carries 3-hydroxyproline. A 4-hydroxyproline modification is found at Pro559. Over residues 570 to 586 (PAGPPGNPGPPGPPGPP) the composition is skewed to pro residues. At Pro573 the chain carries 3-hydroxyproline. Pro574 and Pro577 each carry 4-hydroxyproline. Pro579 carries the post-translational modification 3-hydroxyproline. 4-hydroxyproline occurs at positions 580 and 583. Pro585 carries the 3-hydroxyproline modification. Position 586 is a 4-hydroxyproline (Pro586). A nonhelical region (C-terminal) region spans residues 587–613 (GTGIDMSAFAGLGQTEKGPDPIRYMRA). A propeptide spans 614-859 (DEAAGGLRQH…GVDIGPVCFL (246 aa)) (C-terminal propeptide). Residues 625 to 859 (VEVDATLKSL…GVDIGPVCFL (235 aa)) form the Fibrillar collagen NC1 domain. Cystine bridges form between Cys655–Cys687, Cys695–Cys857, and Cys765–Cys810. Positions 673, 675, 676, 678, and 681 each coordinate Ca(2+). A glycan (N-linked (GlcNAc...) asparagine) is linked at Asn760.

It belongs to the fibrillar collagen family. In terms of assembly, homotrimers of alpha 1(II) chains. Contains mostly 4-hydroxyproline. Prolines at the third position of the tripeptide repeating unit (G-X-P) are 4-hydroxylated in some or all of the chains. In terms of processing, contains 3-hydroxyproline at a few sites. This modification occurs on the first proline residue in the sequence motif Gly-Pro-Hyp, where Hyp is 4-hydroxyproline. Post-translationally, lysine residues at the third position of the tripeptide repeating unit (G-X-Y) are 5-hydroxylated in some or all of the chains. O-glycosylated on hydroxylated lysine residues. The O-linked glycan consists of a Glc-Gal disaccharide.

It is found in the secreted. It localises to the extracellular space. The protein localises to the extracellular matrix. In terms of biological role, type II collagen is specific for cartilaginous tissues. It is essential for the normal embryonic development of the skeleton, for linear growth and for the ability of cartilage to resist compressive forces. In Gallus gallus (Chicken), this protein is Collagen alpha-1(II) chain.